We begin with the raw amino-acid sequence, 92 residues long: 11 kDa excretory-secretory protein (92 aa).

The sequence is that of 11 kDa excretory-secretory protein from Trichostrongylus colubriformis (Black scour worm).